A 334-amino-acid chain; its full sequence is UstYa family oxidase aprY (334 aa).

The chain crosses the membrane as a helical span at residues 55 to 75 (IWILLTITNLIILGITVSMIV). Asparagine 112 carries N-linked (GlcNAc...) asparagine glycosylation. The HXXHC 1 motif lies at 185–189 (HQIHC). A glycan (N-linked (GlcNAc...) asparagine) is linked at asparagine 214. The HXXHC 2 motif lies at 223–227 (HLGHC). Residues 306-318 (SELGEKLGKHQKQ) are compositionally biased toward basic and acidic residues. The segment at 306–334 (SELGEKLGKHQKQEGVLGQAGHQHTKRHE) is disordered.

The protein belongs to the ustYa family.

The protein resides in the membrane. It functions in the pathway secondary metabolite biosynthesis. Functionally, ustYa family oxidase; part of the gene cluster that mediates the biosynthesis of the asperipin-2a, a bicyclic peptide that possesses two macrocyclic ether rings consisting of 14- and 17-membered paracyclophans. Within the pathway, aprY is responsible for the synthesis of the bicyclic structure of asperipin-2a. The pathway starts with the processing of the precursor aprA by kexin proteases to produce 11 identical copies of the hexapeptide Phe-Tyr-Tyr-Thr-Gly-Tyr. Macrocyclization of asperipin-2a may accompany an alpha-hydroxylation-dehydration sequence to give an imine, which is readily hydrolyzed to yield putative ketone intermediate. The reductase aprR may be required for the final reduction to yield asperipin-2a. The polypeptide is UstYa family oxidase aprY (Aspergillus flavus (strain ATCC 200026 / FGSC A1120 / IAM 13836 / NRRL 3357 / JCM 12722 / SRRC 167)).